The chain runs to 100 residues: NADH-quinone oxidoreductase subunit K (100 aa).

The next 3 helical transmembrane spans lie at 4-24 (LQHG…GLLI), 28-48 (LLFM…AFVV), and 60-80 (VMYI…LALL).

The protein belongs to the complex I subunit 4L family. As to quaternary structure, NDH-1 is composed of 13 different subunits. Subunits NuoA, H, J, K, L, M, N constitute the membrane sector of the complex.

The protein localises to the cell inner membrane. The catalysed reaction is a quinone + NADH + 5 H(+)(in) = a quinol + NAD(+) + 4 H(+)(out). In terms of biological role, NDH-1 shuttles electrons from NADH, via FMN and iron-sulfur (Fe-S) centers, to quinones in the respiratory chain. The immediate electron acceptor for the enzyme in this species is believed to be ubiquinone. Couples the redox reaction to proton translocation (for every two electrons transferred, four hydrogen ions are translocated across the cytoplasmic membrane), and thus conserves the redox energy in a proton gradient. This is NADH-quinone oxidoreductase subunit K from Yersinia pseudotuberculosis serotype O:1b (strain IP 31758).